The sequence spans 202 residues: Phospholipase A2 inhibitor gamma subunit A (202 aa).

Residues 1–19 (MKSLQIICLLFIFVARGSC) form the signal peptide. Cystine bridges form between C22/C47, C25/C32, C40/C68, C74/C95, C96/C101, C119/C144, C137/C166, and C170/C192.

This sequence belongs to the CNF-like-inhibitor family. Heteromer composed of subunit A and subunit B. As to expression, expressed by the liver.

The protein resides in the secreted. Functionally, inhibits the enzymatic activity of the phospholipase A2 (PLA2). The sequence is that of Phospholipase A2 inhibitor gamma subunit A from Elaphe climacophora (Japanese rat snake).